An 81-amino-acid polypeptide reads, in one-letter code: Cytochrome b559 subunit alpha (81 aa).

Residues 21–35 (VIHSITIPMLFVAGW) form a helical membrane-spanning segment. Residue His23 participates in heme binding.

It belongs to the PsbE/PsbF family. In terms of assembly, heterodimer of an alpha subunit and a beta subunit. PSII is composed of 1 copy each of membrane proteins PsbA, PsbB, PsbC, PsbD, PsbE, PsbF, PsbH, PsbI, PsbJ, PsbK, PsbL, PsbM, PsbT, PsbX, PsbY, PsbZ, Psb30/Ycf12, peripheral proteins PsbO, CyanoQ (PsbQ), PsbU, PsbV and a large number of cofactors. It forms dimeric complexes. It depends on heme b as a cofactor.

Its subcellular location is the cellular thylakoid membrane. In terms of biological role, this b-type cytochrome is tightly associated with the reaction center of photosystem II (PSII). PSII is a light-driven water:plastoquinone oxidoreductase that uses light energy to abstract electrons from H(2)O, generating O(2) and a proton gradient subsequently used for ATP formation. It consists of a core antenna complex that captures photons, and an electron transfer chain that converts photonic excitation into a charge separation. In Gloeothece citriformis (strain PCC 7424) (Cyanothece sp. (strain PCC 7424)), this protein is Cytochrome b559 subunit alpha.